The primary structure comprises 334 residues: Ornithine carbamoyltransferase, catabolic (334 aa).

Carbamoyl phosphate contacts are provided by residues 57–60, glutamine 84, arginine 108, and 135–138; these read STRT and HPTQ. Residues asparagine 168, aspartate 232, and 236 to 237 contribute to the L-ornithine site; that span reads SM. Carbamoyl phosphate-binding positions include 274-275 and arginine 321; that span reads CL.

Belongs to the aspartate/ornithine carbamoyltransferase superfamily. OTCase family.

It is found in the cytoplasm. It catalyses the reaction carbamoyl phosphate + L-ornithine = L-citrulline + phosphate + H(+). The protein operates within amino-acid degradation; L-arginine degradation via ADI pathway; carbamoyl phosphate from L-arginine: step 2/2. Its function is as follows. Reversibly catalyzes the transfer of the carbamoyl group from carbamoyl phosphate (CP) to the N(epsilon) atom of ornithine (ORN) to produce L-citrulline. The protein is Ornithine carbamoyltransferase, catabolic (arcB) of Haemophilus influenzae (strain ATCC 51907 / DSM 11121 / KW20 / Rd).